The chain runs to 126 residues: MYYPLLSIALGSVLGAWLRWLLGLKLNPIYPQIPLGTVTVNLAGGFIIGFAMAYFAHSDLSPNYKLFVITGFCGALTTFSTFSIEIVTLLQSGKWGMAMLAISIHLIGSLIFTCLGLATYYWVAGN.

Helical transmembrane passes span proline 4–leucine 24, isoleucine 33–alanine 53, phenylalanine 67–valine 87, and methionine 97–leucine 117. The Na(+) site is built by glycine 74 and threonine 77.

The protein belongs to the fluoride channel Fluc/FEX (TC 1.A.43) family.

The protein localises to the cell inner membrane. The enzyme catalyses fluoride(in) = fluoride(out). With respect to regulation, na(+) is not transported, but it plays an essential structural role and its presence is essential for fluoride channel function. In terms of biological role, fluoride-specific ion channel. Important for reducing fluoride concentration in the cell, thus reducing its toxicity. The sequence is that of Fluoride-specific ion channel FluC from Acinetobacter baumannii (strain ACICU).